The primary structure comprises 246 residues: Bis(5'-nucleosyl)-tetraphosphatase PrpE [asymmetrical] (246 aa).

This sequence belongs to the PrpE family. Requires Ni(2+) as cofactor.

It catalyses the reaction P(1),P(4)-bis(5'-guanosyl) tetraphosphate + H2O = GMP + GTP + 2 H(+). Functionally, asymmetrically hydrolyzes Ap4p to yield AMP and ATP. The protein is Bis(5'-nucleosyl)-tetraphosphatase PrpE [asymmetrical] of Bacillus cereus (strain ATCC 10987 / NRS 248).